Here is a 135-residue protein sequence, read N- to C-terminus: uncharacterized protein (135 aa).

This is an uncharacterized protein from Saccharomyces cerevisiae (strain ATCC 204508 / S288c) (Baker's yeast).